We begin with the raw amino-acid sequence, 830 residues long: Periplasmic nitrate reductase (830 aa).

A signal peptide (tat-type signal) is located at residues 1–31 (MKLSRRDFMKANAAVAAAAAAGMTIPTVAKA). The 4Fe-4S Mo/W bis-MGD-type domain maps to 39–95 (IKWDKAPCRFCGTGCGVLVGTQNGRIVASQGDPDSPVNRGLNCIKGYFLPKIMYGKD). [4Fe-4S] cluster contacts are provided by cysteine 46, cysteine 49, cysteine 53, and cysteine 81. Mo-bis(molybdopterin guanine dinucleotide) contacts are provided by residues lysine 83, glutamine 150, asparagine 175, cysteine 179, 212–219 (WGSNMAEM), 243–247 (STYEH), 262–264 (QTD), methionine 372, glutamine 376, asparagine 482, 508–509 (SD), lysine 531, aspartate 558, and 718–727 (TGRVLEHWHT). Phenylalanine 794 is a substrate binding site. Mo-bis(molybdopterin guanine dinucleotide) is bound by residues asparagine 802 and lysine 819.

It belongs to the prokaryotic molybdopterin-containing oxidoreductase family. NasA/NapA/NarB subfamily. Component of the periplasmic nitrate reductase NapAB complex composed of NapA and NapB. Requires [4Fe-4S] cluster as cofactor. Mo-bis(molybdopterin guanine dinucleotide) serves as cofactor. Predicted to be exported by the Tat system. The position of the signal peptide cleavage has not been experimentally proven.

Its subcellular location is the periplasm. It catalyses the reaction 2 Fe(II)-[cytochrome] + nitrate + 2 H(+) = 2 Fe(III)-[cytochrome] + nitrite + H2O. Catalytic subunit of the periplasmic nitrate reductase complex NapAB. Receives electrons from NapB and catalyzes the reduction of nitrate to nitrite. The sequence is that of Periplasmic nitrate reductase from Yersinia pestis bv. Antiqua (strain Antiqua).